The following is an 86-amino-acid chain: Co-chaperonin GroES (86 aa).

It belongs to the GroES chaperonin family. As to quaternary structure, heptamer of 7 subunits arranged in a ring. Interacts with the chaperonin GroEL.

The protein resides in the cytoplasm. Its function is as follows. Together with the chaperonin GroEL, plays an essential role in assisting protein folding. The GroEL-GroES system forms a nano-cage that allows encapsulation of the non-native substrate proteins and provides a physical environment optimized to promote and accelerate protein folding. GroES binds to the apical surface of the GroEL ring, thereby capping the opening of the GroEL channel. This is Co-chaperonin GroES from Campylobacter jejuni subsp. doylei (strain ATCC BAA-1458 / RM4099 / 269.97).